The sequence spans 1524 residues: DNA-directed RNA polymerase subunit beta' (1524 aa).

Zn(2+) contacts are provided by Cys58, Cys60, Cys73, and Cys76. 3 residues coordinate Mg(2+): Asp739, Asp741, and Asp743. Residues Cys1112, Cys1194, Cys1201, and Cys1204 each coordinate Zn(2+). Residues 1502–1524 (AVEAKEKEAPRRPVRREQPGKGL) form a disordered region.

The protein belongs to the RNA polymerase beta' chain family. In terms of assembly, the RNAP catalytic core consists of 2 alpha, 1 beta, 1 beta' and 1 omega subunit. When a sigma factor is associated with the core the holoenzyme is formed, which can initiate transcription. It depends on Mg(2+) as a cofactor. The cofactor is Zn(2+).

It carries out the reaction RNA(n) + a ribonucleoside 5'-triphosphate = RNA(n+1) + diphosphate. Its function is as follows. DNA-dependent RNA polymerase catalyzes the transcription of DNA into RNA using the four ribonucleoside triphosphates as substrates. The sequence is that of DNA-directed RNA polymerase subunit beta' from Thermus aquaticus.